An 807-amino-acid chain; its full sequence is Glucocorticoid receptor (807 aa).

Disordered regions lie at residues 1–47 (MDQG…LPSP), 246–284 (TDVN…QHQQ), and 412–438 (FSVS…SKPS). The modulating stretch occupies residues 1 to 444 (MDQGGLKRNC…SKPSGPTHKI (444 aa)). Positions 257–282 (LQHHQHQQQQHRHLLQHQQHQLHHQH) are enriched in basic residues. A compositionally biased stretch (low complexity) spans 412-421 (FSVSFSSSSP). 2 consecutive NR C4-type zinc fingers follow at residues 445-465 (CLVC…CGSC) and 490-514 (CAGR…FRKC). Residues 445–519 (CLVCSDEASG…RFRKCLQAGM (75 aa)) constitute a DNA-binding region (nuclear receptor). The tract at residues 520–553 (NLEARKNKKLIKMKVHRPTGSAEPISNMPVPVIP) is hinge. The NR LBD domain occupies 554 to 788 (RMPQLVPTML…FPEMLAEIIT (235 aa)).

This sequence belongs to the nuclear hormone receptor family. NR3 subfamily. Heteromultimeric cytoplasmic complex with HSP90. Upon ligand binding the complex undergoes a conformation change and moves to the nucleus, where it dissociates. Binds to DNA as a homodimer, and as heterodimer with NR3C2. Interaction with numerous other transcription factors modulates transcription activation.

It is found in the cytoplasm. Its subcellular location is the nucleus. It localises to the mitochondrion. The protein localises to the cytoskeleton. The protein resides in the spindle. It is found in the microtubule organizing center. Its subcellular location is the centrosome. In terms of biological role, receptor for glucocorticoids (GC). Has a dual mode of action: as a transcription factor that binds to glucocorticoid response elements (GRE), both for nuclear and mitochondrial DNA, and as a modulator of other transcription factors. Affects inflammatory responses, cellular proliferation and differentiation in target tissues. Involved in chromatin remodeling. Plays a role in rapid mRNA degradation by binding to the 5' UTR of target mRNAs and interacting with PNRC2 in a ligand-dependent manner which recruits the RNA helicase UPF1 and the mRNA-decapping enzyme DCP1A, leading to RNA decay. Could act as a coactivator for STAT5-dependent transcription upon growth hormone (GH) stimulation and could reveal an essential role of hepatic GR in the control of body growth. Mediates glucocorticoid-induced apoptosis. Promotes accurate chromosome segregation during mitosis. May act as a tumor suppressor. May play a negative role in adipogenesis through the regulation of lipolytic and antilipogenic gene expression. This chain is Glucocorticoid receptor (nr3c1), found in Paralichthys olivaceus (Bastard halibut).